The chain runs to 554 residues: Glucose-6-phosphate isomerase (554 aa).

Glu-359 (proton donor) is an active-site residue. Active-site residues include His-390 and Lys-518.

It belongs to the GPI family.

It is found in the cytoplasm. It catalyses the reaction alpha-D-glucose 6-phosphate = beta-D-fructose 6-phosphate. The protein operates within carbohydrate biosynthesis; gluconeogenesis. It functions in the pathway carbohydrate degradation; glycolysis; D-glyceraldehyde 3-phosphate and glycerone phosphate from D-glucose: step 2/4. Functionally, catalyzes the reversible isomerization of glucose-6-phosphate to fructose-6-phosphate. The chain is Glucose-6-phosphate isomerase from Pseudomonas entomophila (strain L48).